Reading from the N-terminus, the 691-residue chain is DNA topoisomerase 1 (691 aa).

The 112-residue stretch at Asp3 to Thr114 folds into the Toprim domain. Mg(2+)-binding residues include Glu9 and Asp82. One can recognise a Topo IA-type catalytic domain in the interval Asn129–Val558. The interval Ser163–Gln168 is interaction with DNA. The O-(5'-phospho-DNA)-tyrosine intermediate role is filled by Tyr298. 3 consecutive C4-type zinc fingers follow at residues Cys579–Cys605, Cys619–Cys647, and Cys660–Cys683.

It belongs to the type IA topoisomerase family. As to quaternary structure, monomer. Interacts with the RNA polymerase core. Mg(2+) is required as a cofactor.

The enzyme catalyses ATP-independent breakage of single-stranded DNA, followed by passage and rejoining.. In terms of biological role, releases the supercoiling and torsional tension of DNA, which is introduced during the DNA replication and transcription, by transiently cleaving and rejoining one strand of the DNA duplex. Introduces a single-strand break via transesterification at a target site in duplex DNA. The scissile phosphodiester is attacked by the catalytic tyrosine of the enzyme, resulting in the formation of a DNA-(5'-phosphotyrosyl)-enzyme intermediate and the expulsion of a 3'-OH DNA strand. The free DNA strand then undergoes passage around the unbroken strand, thus removing DNA supercoils. Finally, in the religation step, the DNA 3'-OH attacks the covalent intermediate to expel the active-site tyrosine and restore the DNA phosphodiester backbone. The protein is DNA topoisomerase 1 of Bacillus subtilis (strain 168).